The primary structure comprises 198 residues: Glycerol-3-phosphate acyltransferase (198 aa).

Helical transmembrane passes span 4–24, 71–91, 113–133, and 147–167; these read TYLL…LVVG, LPMI…AVLG, LLCY…TLLF, and VVAV…AMCL.

This sequence belongs to the PlsY family. In terms of assembly, probably interacts with PlsX.

It is found in the cell membrane. The enzyme catalyses an acyl phosphate + sn-glycerol 3-phosphate = a 1-acyl-sn-glycero-3-phosphate + phosphate. It functions in the pathway lipid metabolism; phospholipid metabolism. Its function is as follows. Catalyzes the transfer of an acyl group from acyl-phosphate (acyl-PO(4)) to glycerol-3-phosphate (G3P) to form lysophosphatidic acid (LPA). This enzyme utilizes acyl-phosphate as fatty acyl donor, but not acyl-CoA or acyl-ACP. The protein is Glycerol-3-phosphate acyltransferase of Bacillus cereus (strain G9842).